Consider the following 353-residue polypeptide: Uroporphyrinogen decarboxylase (353 aa).

Substrate-binding positions include 30-34 (RQAGR), Asp-79, Tyr-154, Ser-209, and His-332.

The protein belongs to the uroporphyrinogen decarboxylase family. Homodimer.

The protein localises to the cytoplasm. It catalyses the reaction uroporphyrinogen III + 4 H(+) = coproporphyrinogen III + 4 CO2. It participates in porphyrin-containing compound metabolism; protoporphyrin-IX biosynthesis; coproporphyrinogen-III from 5-aminolevulinate: step 4/4. Catalyzes the decarboxylation of four acetate groups of uroporphyrinogen-III to yield coproporphyrinogen-III. This Mycolicibacterium smegmatis (strain ATCC 700084 / mc(2)155) (Mycobacterium smegmatis) protein is Uroporphyrinogen decarboxylase.